We begin with the raw amino-acid sequence, 160 residues long: Endoribonuclease YbeY (160 aa).

Zn(2+) contacts are provided by H123, H127, and H133.

This sequence belongs to the endoribonuclease YbeY family. It depends on Zn(2+) as a cofactor.

Its subcellular location is the cytoplasm. In terms of biological role, single strand-specific metallo-endoribonuclease involved in late-stage 70S ribosome quality control and in maturation of the 3' terminus of the 16S rRNA. The chain is Endoribonuclease YbeY from Roseiflexus sp. (strain RS-1).